The chain runs to 332 residues: Cytoplasmic phosphatidylinositol transfer protein 1 (332 aa).

Phosphoserine is present on residues Ser119, Ser270, and Ser274. The segment covering 267–285 (SVRSAPSSAPSTPLSTDAP) has biased composition (low complexity). Positions 267–332 (SVRSAPSSAP…SDKPCRPKSE (66 aa)) are disordered. Phosphothreonine is present on Thr278. The span at 322 to 332 (SSDKPCRPKSE) shows a compositional bias: basic and acidic residues.

Belongs to the PtdIns transfer protein family. PI transfer class IIB subfamily. In terms of tissue distribution, ubiquitously expressed.

The protein resides in the cytoplasm. It catalyses the reaction a 1,2-diacyl-sn-glycero-3-phospho-(1D-myo-inositol)(in) = a 1,2-diacyl-sn-glycero-3-phospho-(1D-myo-inositol)(out). The enzyme catalyses a 1,2-diacyl-sn-glycero-3-phosphate(in) = a 1,2-diacyl-sn-glycero-3-phosphate(out). Its function is as follows. Catalyzes the transfer of phosphatidylinositol (PI) and phosphatidic acid (PA) between membranes. Binds PA derived from the phospholipase D signaling pathway and among the cellular PA species, preferably binds to the C16:0/16:1 and C16:1/18:1 PA species. Functionally, catalyzes the transfer of phosphatidylinositol between membranes. The chain is Cytoplasmic phosphatidylinositol transfer protein 1 (PITPNC1) from Homo sapiens (Human).